The chain runs to 257 residues: 5'-nucleotidase SurE (257 aa).

A divalent metal cation contacts are provided by aspartate 15, aspartate 16, serine 46, and asparagine 99.

It belongs to the SurE nucleotidase family. A divalent metal cation serves as cofactor.

It is found in the cytoplasm. The enzyme catalyses a ribonucleoside 5'-phosphate + H2O = a ribonucleoside + phosphate. Nucleotidase that shows phosphatase activity on nucleoside 5'-monophosphates. This chain is 5'-nucleotidase SurE, found in Aliivibrio fischeri (strain ATCC 700601 / ES114) (Vibrio fischeri).